Consider the following 283-residue polypeptide: K88 fimbrial protein AC (283 aa).

The N-terminal stretch at 1–21 (MKKTLIALAIAASAASGMAHA) is a signal peptide.

The protein belongs to the fimbrial K88 protein family. In terms of assembly, K88 fimbria, 0.1-1 micrometer in length and 7 nanometers in diameter, is composed of about 100 identical subunits.

It localises to the fimbrium. In terms of biological role, K88 major fimbrial subunit. Fimbriae (also called pili), are polar filaments radiating from the surface of the bacterium to a length of 0.5-1.5 micrometers and numbering 100-300 per cell. They enable bacteria to colonize the epithelium of specific host organs. This chain is K88 fimbrial protein AC (faeG), found in Escherichia coli.